A 152-amino-acid chain; its full sequence is Small ribosomal subunit protein uS11 (152 aa).

Residues 133–152 (VTPIPTDSTRRKSGHRGRRL) form a disordered region. Residues 143–152 (RKSGHRGRRL) are compositionally biased toward basic residues.

The protein belongs to the universal ribosomal protein uS11 family. Component of the small ribosomal subunit. Part of the small subunit (SSU) processome, composed of more than 70 proteins and the RNA chaperone small nucleolar RNA (snoRNA) U3.

The protein resides in the cytoplasm. It localises to the nucleus. It is found in the nucleolus. Component of the small ribosomal subunit. The ribosome is a large ribonucleoprotein complex responsible for the synthesis of proteins in the cell. Part of the small subunit (SSU) processome, first precursor of the small eukaryotic ribosomal subunit. During the assembly of the SSU processome in the nucleolus, many ribosome biogenesis factors, an RNA chaperone and ribosomal proteins associate with the nascent pre-rRNA and work in concert to generate RNA folding, modifications, rearrangements and cleavage as well as targeted degradation of pre-ribosomal RNA by the RNA exosome. The protein is Small ribosomal subunit protein uS11 (rps14) of Dictyostelium discoideum (Social amoeba).